Consider the following 287-residue polypeptide: Aspartate dehydrogenase domain-containing protein (287 aa).

Serine 24 and serine 172 each carry phosphoserine.

This sequence belongs to the L-aspartate dehydrogenase family.

The polypeptide is Aspartate dehydrogenase domain-containing protein (Mus musculus (Mouse)).